The sequence spans 78 residues: TP53-regulated inhibitor of apoptosis 1 (78 aa).

Positions 1–52 form a coiled coil; that stretch reads MNSVGEECTDMKREYDQCFNRWFAEKFLKGECSGDPCTELFRRYRDCVQKAI. Residues 5 to 55 form the CHCH domain; the sequence is GEECTDMKREYDQCFNRWFAEKFLKGECSGDPCTELFRRYRDCVQKAIKDK. Short sequence motifs (cx9C motif) lie at residues 8 to 18 and 37 to 47; these read CTDMKREYDQC and CTELFRRYRDC. 2 cysteine pairs are disulfide-bonded: cysteine 8–cysteine 47 and cysteine 18–cysteine 37.

Belongs to the TRIAP1/MDM35 family. In terms of assembly, monomer. Forms a complex with prelid1 in the mitochondrion intermembrane space. Interacts with prelid3a. As to expression, expressed in the developing pronephros.

It localises to the mitochondrion. Its subcellular location is the mitochondrion intermembrane space. It carries out the reaction a 1,2-diacyl-sn-glycero-3-phosphate(in) = a 1,2-diacyl-sn-glycero-3-phosphate(out). Its function is as follows. Involved in the modulation of the mitochondrial apoptotic pathway by ensuring the accumulation of cardiolipin (CL) in mitochondrial membranes. The triap1:prelid1 complex probably functions as a phosphatidic acid (PA) transporter across the mitochondrion intermembrane space to provide PA for cardiolipin CL synthesis in the inner membrane. Likewise, the triap1:prelid3a complex mediates the transfer of phosphatidic acid (PA) between liposomes (in vitro) and probably functions as a PA transporter across the mitochondrion intermembrane space (in vivo). Mediates cell survival by inhibiting activation of caspase-9 which prevents induction of apoptosis. Required for pronephros development; probably involved at an early stage in the formation of pronephric components derived from the somatic layer. The chain is TP53-regulated inhibitor of apoptosis 1 from Xenopus tropicalis (Western clawed frog).